We begin with the raw amino-acid sequence, 36 residues long: Photosystem I reaction center subunit VIII (36 aa).

Residues 5-27 (FLPSILVPLVGLVFPAIAIASLF) form a helical membrane-spanning segment.

Belongs to the PsaI family.

It is found in the plastid. It localises to the chloroplast thylakoid membrane. May help in the organization of the PsaL subunit. This Chaetosphaeridium globosum (Charophycean green alga) protein is Photosystem I reaction center subunit VIII.